Consider the following 518-residue polypeptide: Glutamate--cysteine ligase (518 aa).

Belongs to the glutamate--cysteine ligase type 1 family. Type 1 subfamily.

It carries out the reaction L-cysteine + L-glutamate + ATP = gamma-L-glutamyl-L-cysteine + ADP + phosphate + H(+). The protein operates within sulfur metabolism; glutathione biosynthesis; glutathione from L-cysteine and L-glutamate: step 1/2. The sequence is that of Glutamate--cysteine ligase from Salmonella typhi.